We begin with the raw amino-acid sequence, 351 residues long: DNA polymerase IV (351 aa).

Residues 4-185 enclose the UmuC domain; that stretch reads IIHVDMDCFF…LPLAKIPGVG (182 aa). Positions 8 and 103 each coordinate Mg(2+). Glu104 is an active-site residue.

It belongs to the DNA polymerase type-Y family. Monomer. Requires Mg(2+) as cofactor.

The protein resides in the cytoplasm. It carries out the reaction DNA(n) + a 2'-deoxyribonucleoside 5'-triphosphate = DNA(n+1) + diphosphate. Poorly processive, error-prone DNA polymerase involved in untargeted mutagenesis. Copies undamaged DNA at stalled replication forks, which arise in vivo from mismatched or misaligned primer ends. These misaligned primers can be extended by PolIV. Exhibits no 3'-5' exonuclease (proofreading) activity. May be involved in translesional synthesis, in conjunction with the beta clamp from PolIII. This chain is DNA polymerase IV (dinB), found in Escherichia coli O6:H1 (strain CFT073 / ATCC 700928 / UPEC).